The sequence spans 96 residues: Beta-defensin 132 (96 aa).

An N-terminal signal peptide occupies residues 1 to 22 (MKFLLLVLAALRFLTQVIPASG). 3 cysteine pairs are disulfide-bonded: Cys27–Cys55, Cys35–Cys49, and Cys39–Cys56. The segment at 74-96 (HWQSRRRNTQRKDKKQQTTVTSS) is disordered. Over residues 76–87 (QSRRRNTQRKDK) the composition is skewed to basic residues.

The protein belongs to the beta-defensin family.

It is found in the secreted. Its function is as follows. Has antibacterial activity. The sequence is that of Beta-defensin 132 (DEFB132) from Hylobates lar (Lar gibbon).